A 913-amino-acid polypeptide reads, in one-letter code: Eukaryotic translation initiation factor 3 subunit C (913 aa).

The segment at methionine 1–phenylalanine 31 is disordered. The segment covering serine 11–valine 20 has biased composition (acidic residues). Residues glutamine 21–phenylalanine 31 show a composition bias toward polar residues. Residues serine 34, serine 165, serine 177, and serine 186 each carry the phosphoserine modification. Disordered regions lie at residues phenylalanine 157 to glycine 195 and proline 208 to glutamate 285. Positions aspartate 162–glutamate 171 are enriched in acidic residues. Positions glycine 172 to alanine 184 are enriched in basic and acidic residues. Residues aspartate 214–asparagine 239 show a composition bias toward acidic residues. Over residues methionine 244–arginine 263 the composition is skewed to basic and acidic residues. Basic residues predominate over residues lysine 264–lysine 276. The PCI domain maps to phenylalanine 645 to proline 821. Positions arginine 856–glutamate 913 are disordered. Basic residues predominate over residues glutamine 887–glutamine 898.

The protein belongs to the eIF-3 subunit C family. In terms of assembly, component of the eukaryotic translation initiation factor 3 (eIF-3) complex. The eIF-3 complex interacts with pix.

The protein resides in the cytoplasm. In terms of biological role, component of the eukaryotic translation initiation factor 3 (eIF-3) complex, which is involved in protein synthesis of a specialized repertoire of mRNAs and, together with other initiation factors, stimulates binding of mRNA and methionyl-tRNAi to the 40S ribosome. The eIF-3 complex specifically targets and initiates translation of a subset of mRNAs involved in cell proliferation. The chain is Eukaryotic translation initiation factor 3 subunit C from Drosophila virilis (Fruit fly).